A 424-amino-acid chain; its full sequence is MKLEMICTGEEVLSGQIVDTNAAWFASTMMEHGIEIQRRVTVGDRLEDLIAVFQERSLHADVILVNGGLGPTSDDMSAEAMAKAKGESLVENIEWRQQLEDWFTRNNREMPVSNLKQAMLPESAVMVDNPVGTACGFRVKLNRAWLFFTPGVPFELKHMVKEQFIPFIRDEFNLDAKVALKKLLTIGQGESALADKIEPLELPEGITIGYRSSMPHIEIKIFARGEKAIVLLPRVTGHVKMVLGTAVVAEDKATLAEEIHSRLLNSGLTLSVAESCTGGMITSQLVDFAGSSSYLHHGLVTYSNESKVRVLGVNPATLDDHGAVSIPTVEEMAKGARAILDSDFALATSGIAGPDGGTEDKPVGTVAIALATRNGVYSQMIKLPRRSRDLVRSLSAAVAYDMLRRELLAEAVIVDYQSIGRFSK.

This sequence belongs to the CinA family.

The polypeptide is CinA-like protein (Shewanella putrefaciens (strain CN-32 / ATCC BAA-453)).